Reading from the N-terminus, the 466-residue chain is MTASQDFVVKDLSLADWGRKELDIAETEMPGLMAAREEFGKSQPLKGARISGSLHMTIQTAVLIETLQALGAEVRWASCNIFSTQDHAAAAIAATGTPVFAIKGETLEEYWTYTDQIFQWPDGEPSNMILDDGGDATMYILIGARAEAGEDVLSNPGSEEEEVLFAQIKKRMAATPGFFTRQRDAIKGVTEETTTGVNRLYQLQKKGLLPFPAINVNDSVTKSKFDNKYGCKESLVDGIRRGTDVMMAGKVAVVCGYGDVGKGSAQSLAGAGARVKVTEVDPICALQAAMDGFEVVTLDDAASTADIIVTTTGNKDVITIDHMRKFKDMAIVGNIGHFDNEIQVAALRNLKWTNVKPQVDLIEFPDGKRIILLSEGRLLNLGNATGHPSFVMSASFTNQVLGQIELFTRTDAYKNEVYVLPKHLDEKVARLHLDKLGAKLTVLSEEQAAYIGVTPQGPFKSEHYRY.

Substrate contacts are provided by Thr-57, Asp-132, and Glu-192. 193–195 (TTT) lines the NAD(+) pocket. Residues Lys-222 and Asp-226 each coordinate substrate. NAD(+) is bound by residues Asn-227, 256-261 (GYGDVG), Glu-279, Asn-314, 335-337 (IGH), and Asn-380.

It belongs to the adenosylhomocysteinase family. It depends on NAD(+) as a cofactor.

The protein localises to the cytoplasm. It carries out the reaction S-adenosyl-L-homocysteine + H2O = L-homocysteine + adenosine. Its pathway is amino-acid biosynthesis; L-homocysteine biosynthesis; L-homocysteine from S-adenosyl-L-homocysteine: step 1/1. May play a key role in the regulation of the intracellular concentration of adenosylhomocysteine. The protein is Adenosylhomocysteinase of Brucella anthropi (strain ATCC 49188 / DSM 6882 / CCUG 24695 / JCM 21032 / LMG 3331 / NBRC 15819 / NCTC 12168 / Alc 37) (Ochrobactrum anthropi).